The sequence spans 956 residues: Valine--tRNA ligase (956 aa).

The 'HIGH' region signature appears at Pro69–His79. Residues Lys566–Ser570 carry the 'KMSKS' region motif. Lys569 is a binding site for ATP. Positions Leu885 to Gln911 form a coiled coil.

Belongs to the class-I aminoacyl-tRNA synthetase family. ValS type 1 subfamily. As to quaternary structure, monomer.

It is found in the cytoplasm. The catalysed reaction is tRNA(Val) + L-valine + ATP = L-valyl-tRNA(Val) + AMP + diphosphate. In terms of biological role, catalyzes the attachment of valine to tRNA(Val). As ValRS can inadvertently accommodate and process structurally similar amino acids such as threonine, to avoid such errors, it has a 'posttransfer' editing activity that hydrolyzes mischarged Thr-tRNA(Val) in a tRNA-dependent manner. The sequence is that of Valine--tRNA ligase from Treponema pallidum (strain Nichols).